Consider the following 116-residue polypeptide: PTS system N,N'-diacetylchitobiose-specific EIIA component (116 aa).

The region spanning 15–113 (EELEEVVMGL…ITELIELHEK (99 aa)) is the PTS EIIA type-3 domain. His89 functions as the Tele-phosphohistidine intermediate in the catalytic mechanism. At His89 the chain carries Phosphohistidine; by HPr.

In terms of assembly, forms a complex with ChbB (EIIB). ChbA is a homotrimer. The cofactor is Mg(2+).

The protein resides in the cytoplasm. In terms of biological role, the phosphoenolpyruvate-dependent sugar phosphotransferase system (sugar PTS), a major carbohydrate active transport system, catalyzes the phosphorylation of incoming sugar substrates concomitantly with their translocation across the cell membrane. The enzyme II ChbABC PTS system is involved in the transport of the chitin disaccharide N,N'-diacetylchitobiose (GlcNAc2). This Escherichia coli O157:H7 protein is PTS system N,N'-diacetylchitobiose-specific EIIA component (chbA).